The primary structure comprises 66 residues: Beta-toxin Cll1m (66 aa).

One can recognise an LCN-type CS-alpha/beta domain in the interval 1 to 66 (KEGYIVNLST…VWPLPKKTCT (66 aa)). Disulfide bonds link Cys12–Cys65, Cys16–Cys41, Cys25–Cys46, and Cys29–Cys48. At Thr66 the chain carries Threonine amide.

It belongs to the long (4 C-C) scorpion toxin superfamily. Sodium channel inhibitor family. Beta subfamily. In terms of tissue distribution, expressed by the venom gland.

The protein resides in the secreted. Its function is as follows. Beta toxins bind voltage-independently at site-4 of sodium channels (Nav) and shift the voltage of activation toward more negative potentials thereby affecting sodium channel activation and promoting spontaneous and repetitive firing. The sequence is that of Beta-toxin Cll1m from Centruroides limpidus (Mexican scorpion).